The sequence spans 669 residues: Glycerol uptake/efflux facilitator protein (669 aa).

A compositionally biased stretch (polar residues) spans 1–16; it reads MSNPQKALNDFLSSES. Disordered regions lie at residues 1–99 and 123–147; these read MSNP…TYVP and QDIN…RGQT. At 1–254 the chain is on the extracellular side; it reads MSNPQKALND…WSSVKNTYLK (254 aa). Positions 50–68 are enriched in low complexity; sequence NNNNNNNNNNNNSNNNNNG. The segment covering 72-81 has biased composition (acidic residues); that stretch reads GNDDDYDYEM. Composition is skewed to polar residues over residues 87-99 and 133-147; these read SPQS…TYVP and PSAS…RGQT. Position 150 is a phosphoserine (S150). The segment at 167-215 is disordered; the sequence is HTIPESHLSRRRSRSRATSNAGHSANTGATNGRTTGAQTNMESNESPRN. T168 bears the Phosphothreonine mark. Positions 191–206 are enriched in low complexity; it reads ANTGATNGRTTGAQTN. A phosphoserine mark is found at S209 and S212. Residues 255–275 form a helical membrane-spanning segment; it reads EFLAEFMGTMVMIIFGSAVVC. Over 276–325 the chain is Cytoplasmic; sequence QVNVAGKIQQDNFNVALDNLNVTGSSAETIDAMKSLTSLVSSVAGGTFDD. The helical transmembrane segment at 326–346 threads the bilayer; it reads VALGWAAAVVMGYFCAGGSAI. The Extracellular portion of the chain corresponds to 347 to 369; it reads SGAHLNPSITLANLVYRGFPLKK. Positions 352–354 match the NPA 1 motif; that stretch reads NPS. The chain crosses the membrane as a helical span at residues 370–390; the sequence is VPYYFAGQLIGAFTGALILFI. The Cytoplasmic portion of the chain corresponds to 391-446; that stretch reads WYKRVLQEAYSDWWMNESVAGMFCVFPKPYLSSGRQFFSEFLCGAMLQAGTFALTD. A helical membrane pass occupies residues 447 to 467; it reads PYTCLSSDVFPLMMFILIFII. At 468-506 the chain is on the extracellular side; the sequence is NASMAYQTGTAMNLARDLGPRLALYAVGFDHKMLWVHHH. Residues 480-482 carry the NPA 2 motif; sequence NLA. Residues 507 to 527 traverse the membrane as a helical segment; sequence HFFWVPMVGPFIGALMGGLVY. At 528-669 the chain is on the cytoplasmic side; that stretch reads DVCIYQGHES…SHYGNAKKVT (142 aa). Disordered regions lie at residues 591 to 615 and 635 to 669; these read LQKT…VQFK and DSIE…KKVT. The span at 638-655 shows a compositional bias: polar residues; the sequence is ETASLGATTTDSIGLSDT.

It belongs to the MIP/aquaporin (TC 1.A.8) family.

The protein localises to the membrane. In terms of biological role, channel protein for glycerol. Has a role in both glycerol influx and efflux. Plays a role in osmoregulation: under osmotic stress the channel is apparently closed to allow accumulation of glycerol in the cell under hyperosmotic conditions. The polypeptide is Glycerol uptake/efflux facilitator protein (FPS1) (Saccharomyces cerevisiae (strain ATCC 204508 / S288c) (Baker's yeast)).